The primary structure comprises 465 residues: UDP-N-acetylmuramate--L-alanine ligase (465 aa).

125-131 (GTHGKTT) serves as a coordination point for ATP.

Belongs to the MurCDEF family.

It is found in the cytoplasm. It catalyses the reaction UDP-N-acetyl-alpha-D-muramate + L-alanine + ATP = UDP-N-acetyl-alpha-D-muramoyl-L-alanine + ADP + phosphate + H(+). It participates in cell wall biogenesis; peptidoglycan biosynthesis. Its function is as follows. Cell wall formation. The polypeptide is UDP-N-acetylmuramate--L-alanine ligase (Deinococcus geothermalis (strain DSM 11300 / CIP 105573 / AG-3a)).